Reading from the N-terminus, the 55-residue chain is Spermatid nuclear transition protein 1 (55 aa).

Basic residues predominate over residues 1 to 42 (MSTSRKLKSHGMRRGKNRAPHKGVKRGGSKRKYRKGSLKSRK). The segment at 1-55 (MSTSRKLKSHGMRRGKNRAPHKGVKRGGSKRKYRKGSLKSRKRCDDANRNYRSHL) is disordered. Ser9, Ser37, and Ser40 each carry phosphoserine.

Belongs to the nuclear transition protein 1 family. As to expression, testis.

It is found in the nucleus. The protein resides in the chromosome. Plays a key role in the replacement of histones to protamine in the elongating spermatids of mammals. In condensing spermatids, loaded onto the nucleosomes, where it promotes the recruitment and processing of protamines, which are responsible for histone eviction. This chain is Spermatid nuclear transition protein 1 (TNP1), found in Sus scrofa (Pig).